We begin with the raw amino-acid sequence, 332 residues long: RNA polymerase principal sigma factor HrdD (332 aa).

A compositionally biased stretch (basic residues) spans 1 to 11; that stretch reads MATRAVARRKS. The tract at residues 1–25 is disordered; sequence MATRAVARRKSAAGETSGSATSVRA. Positions 13–22 are enriched in low complexity; it reads AGETSGSATS. A Polymerase core binding motif is present at residues 124–137; that stretch reads DLIQEGNAGLVRAV. A DNA-binding region (H-T-H motif) is located at residues 294-313; it reads LTEVGKEHGLTRERIRQIEK.

Belongs to the sigma-70 factor family. Interacts transiently with the RNA polymerase catalytic core.

In terms of biological role, sigma factors are initiation factors that promote the attachment of RNA polymerase to specific initiation sites and are then released. The chain is RNA polymerase principal sigma factor HrdD (hrdD) from Streptomyces coelicolor (strain ATCC BAA-471 / A3(2) / M145).